Consider the following 213-residue polypeptide: N-(5'-phosphoribosyl)anthranilate isomerase (213 aa).

The protein belongs to the TrpF family.

It catalyses the reaction N-(5-phospho-beta-D-ribosyl)anthranilate = 1-(2-carboxyphenylamino)-1-deoxy-D-ribulose 5-phosphate. It participates in amino-acid biosynthesis; L-tryptophan biosynthesis; L-tryptophan from chorismate: step 3/5. The polypeptide is N-(5'-phosphoribosyl)anthranilate isomerase (Leptospira interrogans serogroup Icterohaemorrhagiae serovar copenhageni (strain Fiocruz L1-130)).